Consider the following 176-residue polypeptide: Large ribosomal subunit protein uL6 (176 aa).

Belongs to the universal ribosomal protein uL6 family. As to quaternary structure, part of the 50S ribosomal subunit.

Its function is as follows. This protein binds to the 23S rRNA, and is important in its secondary structure. It is located near the subunit interface in the base of the L7/L12 stalk, and near the tRNA binding site of the peptidyltransferase center. In Burkholderia mallei (strain NCTC 10247), this protein is Large ribosomal subunit protein uL6.